Consider the following 481-residue polypeptide: Aspartyl/glutamyl-tRNA(Asn/Gln) amidotransferase subunit B (481 aa).

Belongs to the GatB/GatE family. GatB subfamily. As to quaternary structure, heterotrimer of A, B and C subunits.

The catalysed reaction is L-glutamyl-tRNA(Gln) + L-glutamine + ATP + H2O = L-glutaminyl-tRNA(Gln) + L-glutamate + ADP + phosphate + H(+). It catalyses the reaction L-aspartyl-tRNA(Asn) + L-glutamine + ATP + H2O = L-asparaginyl-tRNA(Asn) + L-glutamate + ADP + phosphate + 2 H(+). Allows the formation of correctly charged Asn-tRNA(Asn) or Gln-tRNA(Gln) through the transamidation of misacylated Asp-tRNA(Asn) or Glu-tRNA(Gln) in organisms which lack either or both of asparaginyl-tRNA or glutaminyl-tRNA synthetases. The reaction takes place in the presence of glutamine and ATP through an activated phospho-Asp-tRNA(Asn) or phospho-Glu-tRNA(Gln). This chain is Aspartyl/glutamyl-tRNA(Asn/Gln) amidotransferase subunit B, found in Pseudomonas fluorescens (strain Pf0-1).